Here is a 63-residue protein sequence, read N- to C-terminus: Large ribosomal subunit protein bL32 (63 aa).

Over residues 1–18 (MPVPKRKTSPSRRGKRRS) the composition is skewed to basic residues. Residues 1-26 (MPVPKRKTSPSRRGKRRSHDGLRPEN) are disordered.

This sequence belongs to the bacterial ribosomal protein bL32 family.

This Neorickettsia sennetsu (strain ATCC VR-367 / Miyayama) (Ehrlichia sennetsu) protein is Large ribosomal subunit protein bL32.